The primary structure comprises 88 residues: Acylphosphatase (88 aa).

The region spanning 3 to 88 (AARFIFTGVV…IPTTEAFVTG (86 aa)) is the Acylphosphatase-like domain. Residues Arg-18 and Asn-36 contribute to the active site.

The protein belongs to the acylphosphatase family.

It catalyses the reaction an acyl phosphate + H2O = a carboxylate + phosphate + H(+). The chain is Acylphosphatase (acyP) from Xanthomonas campestris pv. campestris (strain 8004).